Consider the following 626-residue polypeptide: Elongation factor 4 (626 aa).

One can recognise a tr-type G domain in the interval 14–195 (SVIRNFCIIA…QIVMDVPAPH (182 aa)). GTP is bound by residues 26–31 (DHGKST) and 142–145 (NKID). A disordered region spans residues 603 to 626 (LSTGEDSNDRDTKDKIRAAQKTEG). Residues 609 to 626 (SNDRDTKDKIRAAQKTEG) are compositionally biased toward basic and acidic residues.

This sequence belongs to the TRAFAC class translation factor GTPase superfamily. Classic translation factor GTPase family. LepA subfamily.

Its subcellular location is the cell membrane. The catalysed reaction is GTP + H2O = GDP + phosphate + H(+). Its function is as follows. Required for accurate and efficient protein synthesis under certain stress conditions. May act as a fidelity factor of the translation reaction, by catalyzing a one-codon backward translocation of tRNAs on improperly translocated ribosomes. Back-translocation proceeds from a post-translocation (POST) complex to a pre-translocation (PRE) complex, thus giving elongation factor G a second chance to translocate the tRNAs correctly. Binds to ribosomes in a GTP-dependent manner. In Bifidobacterium longum subsp. infantis (strain ATCC 15697 / DSM 20088 / JCM 1222 / NCTC 11817 / S12), this protein is Elongation factor 4.